The sequence spans 352 residues: Staphylococcal superantigen-like 3 (352 aa).

A signal peptide spans 1 to 30 (MKMRTIAKTSLALGLLTTGAITVTTQSVKA). The interval 61–165 (ATTQAANTRQ…TIKQAQTDMT (105 aa)) is disordered. Positions 69–104 (RQERTPKLEKAPNTNEEKTSASKIEKISQPKQEEQK) are enriched in basic and acidic residues. Residues 114 to 141 (PKQEQSQTTTESTTPKTKVTTPPSTNTP) show a composition bias toward low complexity. Residues 142-164 (QPMQSTKSDTPQSPTIKQAQTDM) are compositionally biased toward polar residues. Residues 228–326 (IDVFIVLEDN…VIKMKNGGKY (99 aa)) are sialyl Lewis X-binding.

The protein belongs to the staphylococcal/streptococcal toxin family. As to quaternary structure, interacts with host TLR2 (via its extracellular domain).

Its subcellular location is the secreted. Secreted protein that plays an essential role in immune innate response inhibition by interacting with and inhibiting host TLR2. In turn, bacteria recognition by immune cells is impaired and cytokine production is inhibited. Mechanistically, by interacting with TLR2, blocks ligand binding and thus inhibits activation. Second, by interacting with an already formed TLR2-lipopeptide complex, prevents TLR heterodimerization and downstream signaling. The interaction with host TLR2 does not involve sialyl Lewis X interactions. This is Staphylococcal superantigen-like 3 from Staphylococcus aureus (strain Newman).